The chain runs to 129 residues: Holo-[acyl-carrier-protein] synthase (129 aa).

Positions 8 and 58 each coordinate Mg(2+).

This sequence belongs to the P-Pant transferase superfamily. AcpS family. Mg(2+) serves as cofactor.

The protein localises to the cytoplasm. The enzyme catalyses apo-[ACP] + CoA = holo-[ACP] + adenosine 3',5'-bisphosphate + H(+). Its function is as follows. Transfers the 4'-phosphopantetheine moiety from coenzyme A to a Ser of acyl-carrier-protein. This is Holo-[acyl-carrier-protein] synthase from Geobacillus kaustophilus (strain HTA426).